We begin with the raw amino-acid sequence, 252 residues long: C-type lectin domain family 2 member D3 (252 aa).

The segment at methionine 1–arginine 58 is disordered. The Cytoplasmic segment spans residues methionine 1–tyrosine 78. Residues glycine 16 to glutamine 29 are compositionally biased toward polar residues. The segment covering serine 30–serine 43 has biased composition (low complexity). Residues glycine 79–valine 99 traverse the membrane as a helical; Signal-anchor for type II membrane protein segment. Topologically, residues lysine 100–glutamine 252 are extracellular. Residues tyrosine 137–serine 242 enclose the C-type lectin domain. Asparagine 150 is a glycosylation site (N-linked (GlcNAc...) asparagine). A disulfide bond links cysteine 158 and cysteine 241.

Its subcellular location is the cell membrane. Its function is as follows. Lectin-type cell surface receptor. The protein is C-type lectin domain family 2 member D3 (Clec2d3) of Rattus norvegicus (Rat).